A 106-amino-acid polypeptide reads, in one-letter code: UPF0122 protein Exig_1902 (106 aa).

This sequence belongs to the UPF0122 family.

Functionally, might take part in the signal recognition particle (SRP) pathway. This is inferred from the conservation of its genetic proximity to ftsY/ffh. May be a regulatory protein. The sequence is that of UPF0122 protein Exig_1902 from Exiguobacterium sibiricum (strain DSM 17290 / CCUG 55495 / CIP 109462 / JCM 13490 / 255-15).